A 457-amino-acid chain; its full sequence is uncharacterized protein (457 aa).

This is an uncharacterized protein from Synechocystis sp. (strain ATCC 27184 / PCC 6803 / Kazusa).